Consider the following 215-residue polypeptide: Cytochrome b6 (215 aa).

Residues 32-52 (IFYCLGGITLTCFLVQVATGF) form a helical membrane-spanning segment. Cys-35 contacts heme c. Positions 86 and 100 each coordinate heme b. Transmembrane regions (helical) follow at residues 90-110 (ASMM…TGGF), 116-136 (LTWV…VTGY), and 186-206 (LHTF…FLMI). Positions 187 and 202 each coordinate heme b.

The protein belongs to the cytochrome b family. PetB subfamily. The 4 large subunits of the cytochrome b6-f complex are cytochrome b6, subunit IV (17 kDa polypeptide, PetD), cytochrome f and the Rieske protein, while the 4 small subunits are PetG, PetL, PetM and PetN. The complex functions as a dimer. The cofactor is heme b. Heme c is required as a cofactor.

It localises to the plastid. Its subcellular location is the chloroplast thylakoid membrane. Component of the cytochrome b6-f complex, which mediates electron transfer between photosystem II (PSII) and photosystem I (PSI), cyclic electron flow around PSI, and state transitions. In Pisum sativum (Garden pea), this protein is Cytochrome b6.